The primary structure comprises 208 residues: Ribosomal RNA small subunit methyltransferase G (208 aa).

S-adenosyl-L-methionine-binding positions include glycine 76, leucine 81, valine 127–glutamate 128, and arginine 142.

This sequence belongs to the methyltransferase superfamily. RNA methyltransferase RsmG family.

The protein resides in the cytoplasm. The catalysed reaction is guanosine(527) in 16S rRNA + S-adenosyl-L-methionine = N(7)-methylguanosine(527) in 16S rRNA + S-adenosyl-L-homocysteine. Functionally, specifically methylates the N7 position of guanine in position 527 of 16S rRNA. In Legionella pneumophila (strain Lens), this protein is Ribosomal RNA small subunit methyltransferase G.